Reading from the N-terminus, the 474-residue chain is ATP synthase subunit beta (474 aa).

151–158 (GGAGVGKT) is a binding site for ATP.

This sequence belongs to the ATPase alpha/beta chains family. As to quaternary structure, F-type ATPases have 2 components, CF(1) - the catalytic core - and CF(0) - the membrane proton channel. CF(1) has five subunits: alpha(3), beta(3), gamma(1), delta(1), epsilon(1). CF(0) has three main subunits: a(1), b(2) and c(9-12). The alpha and beta chains form an alternating ring which encloses part of the gamma chain. CF(1) is attached to CF(0) by a central stalk formed by the gamma and epsilon chains, while a peripheral stalk is formed by the delta and b chains.

It is found in the cell inner membrane. It catalyses the reaction ATP + H2O + 4 H(+)(in) = ADP + phosphate + 5 H(+)(out). Produces ATP from ADP in the presence of a proton gradient across the membrane. The catalytic sites are hosted primarily by the beta subunits. This chain is ATP synthase subunit beta, found in Paracoccus denitrificans (strain Pd 1222).